The primary structure comprises 180 residues: Shikimate kinase (180 aa).

14-19 (GAGKSC) contacts ATP. Ser18 provides a ligand contact to Mg(2+). Substrate contacts are provided by Asp36, Arg60, and Gly82. Arg120 contacts ATP. A substrate-binding site is contributed by Arg139.

It belongs to the shikimate kinase family. In terms of assembly, monomer. Requires Mg(2+) as cofactor.

It is found in the cytoplasm. It carries out the reaction shikimate + ATP = 3-phosphoshikimate + ADP + H(+). It functions in the pathway metabolic intermediate biosynthesis; chorismate biosynthesis; chorismate from D-erythrose 4-phosphate and phosphoenolpyruvate: step 5/7. In terms of biological role, catalyzes the specific phosphorylation of the 3-hydroxyl group of shikimic acid using ATP as a cosubstrate. The protein is Shikimate kinase of Xanthomonas oryzae pv. oryzae (strain PXO99A).